The following is a 121-amino-acid chain: uncharacterized protein (121 aa).

Positions 8–37 (KQLMVCRDEIKKLKLKEKEAKNRILTYLKN) form a coiled coil.

This is an uncharacterized protein from Aedes vexans (Inland floodwater mosquito).